The chain runs to 546 residues: Chaperonin GroEL (546 aa).

ATP contacts are provided by residues 29–32, Lys50, 86–90, Gly412, 476–478, and Asp492; these read TMGP, DGTTT, and NAA.

The protein belongs to the chaperonin (HSP60) family. As to quaternary structure, forms a cylinder of 14 subunits composed of two heptameric rings stacked back-to-back. Interacts with the co-chaperonin GroES.

The protein localises to the cytoplasm. It catalyses the reaction ATP + H2O + a folded polypeptide = ADP + phosphate + an unfolded polypeptide.. Its function is as follows. Together with its co-chaperonin GroES, plays an essential role in assisting protein folding. The GroEL-GroES system forms a nano-cage that allows encapsulation of the non-native substrate proteins and provides a physical environment optimized to promote and accelerate protein folding. May play a protective role against the defense mechanisms generated by the infected macrophages. This chain is Chaperonin GroEL, found in Legionella micdadei (Tatlockia micdadei).